A 191-amino-acid chain; its full sequence is Probable GTP-binding protein EngB (191 aa).

The region spanning 19-188 (NIPEICFMGR…HKKIFELFVE (170 aa)) is the EngB-type G domain. Residues 27-34 (GRSNVGKS), 53-57 (GRTQL), 70-73 (DLPG), 136-139 (NKFD), and 167-169 (AST) each bind GTP. Positions 34 and 55 each coordinate Mg(2+).

Belongs to the TRAFAC class TrmE-Era-EngA-EngB-Septin-like GTPase superfamily. EngB GTPase family. The cofactor is Mg(2+).

Its function is as follows. Necessary for normal cell division and for the maintenance of normal septation. This chain is Probable GTP-binding protein EngB, found in Mycoplasma genitalium (strain ATCC 33530 / DSM 19775 / NCTC 10195 / G37) (Mycoplasmoides genitalium).